A 39-amino-acid chain; its full sequence is Photosystem II reaction center protein L (39 aa).

Residues 18 to 38 (ILYWGLLLIFVLAVLFSNYFF) form a helical membrane-spanning segment.

It belongs to the PsbL family. As to quaternary structure, PSII is composed of 1 copy each of membrane proteins PsbA, PsbB, PsbC, PsbD, PsbE, PsbF, PsbH, PsbI, PsbJ, PsbK, PsbL, PsbM, PsbT, PsbX, PsbY, PsbZ, Psb30/Ycf12, at least 3 peripheral proteins of the oxygen-evolving complex and a large number of cofactors. It forms dimeric complexes.

The protein localises to the plastid membrane. One of the components of the core complex of photosystem II (PSII). PSII is a light-driven water:plastoquinone oxidoreductase that uses light energy to abstract electrons from H(2)O, generating O(2) and a proton gradient subsequently used for ATP formation. It consists of a core antenna complex that captures photons, and an electron transfer chain that converts photonic excitation into a charge separation. This subunit is found at the monomer-monomer interface and is required for correct PSII assembly and/or dimerization. The protein is Photosystem II reaction center protein L of Cuscuta pentagona (Five-angled dodder).